The chain runs to 269 residues: Protein TORNADO 2 (269 aa).

The Cytoplasmic portion of the chain corresponds to 1 to 10 (MPLSNNVIGC). Residues 11-31 (INFITVLLSIPVIGAGIWLAI) form a helical membrane-spanning segment. Over 32-44 (GTVNSCVKLLQWP) the chain is Extracellular. A helical membrane pass occupies residues 45–65 (VIILGVLILLVGLAGFIGGFW). Residues 66 to 71 (RITWLL) are Cytoplasmic-facing. Residues 72–92 (VVYLIAMLILIVLLGCLVGFI) form a helical membrane-spanning segment. The Extracellular segment spans residues 93-231 (YMVTIRGSGH…NIKVDWLKAD (139 aa)). Residue N200 is glycosylated (N-linked (GlcNAc...) asparagine). The chain crosses the membrane as a helical span at residues 232–252 (IFLLLALIGLIIVYIIGCCAF). Topologically, residues 253–269 (RNAETEDIFRKYKQGYT) are cytoplasmic.

Belongs to the tetraspanin (TM4SF) family. In terms of tissue distribution, expressed in seedlings, roots, leaves, stems, apex, siliques and flowers. Present in ovules, prominently in nucellus and integuments.

It localises to the membrane. In terms of biological role, involved in the basipetal transport of auxin (IAA) that modulates growth and organs organization, as well as cell differentiation. Regulates shoot apical meristem (SAM) organization in the peripheral zone. Required for initial meristematic divisions in the epidermal/lateral root cap leading to the formation of epidermal cells and a clone of lateral root cap cells, as well as for the maintenance of the radial pattern of cell specification in the root, thus regulating the distinction between the lateral root cap and epidermis. Together with WIH peptides, promotes megasporogenesis. The sequence is that of Protein TORNADO 2 (TRN2) from Arabidopsis thaliana (Mouse-ear cress).